Here is a 183-residue protein sequence, read N- to C-terminus: Adenine phosphoribosyltransferase (183 aa).

This sequence belongs to the purine/pyrimidine phosphoribosyltransferase family. In terms of assembly, homodimer.

It is found in the cytoplasm. The catalysed reaction is AMP + diphosphate = 5-phospho-alpha-D-ribose 1-diphosphate + adenine. It functions in the pathway purine metabolism; AMP biosynthesis via salvage pathway; AMP from adenine: step 1/1. Its function is as follows. Catalyzes a salvage reaction resulting in the formation of AMP, that is energically less costly than de novo synthesis. The protein is Adenine phosphoribosyltransferase of Citrobacter koseri (strain ATCC BAA-895 / CDC 4225-83 / SGSC4696).